We begin with the raw amino-acid sequence, 550 residues long: Complement control protein (550 aa).

The first 19 residues, 1–19 (MAFLRQTLWILWTFTMVIG), serve as a signal peptide directing secretion. Sushi domains lie at 23–83 (EKCS…TCNK), 84–150 (KSCP…FCEK), 151–209 (EKCH…TCEL), and 210–268 (AGCK…KCVL). Cystine bridges form between C25-C68, C53-C81, C86-C131, C116-C148, C153-C194, C180-C207, C212-C254, and C240-C266. N-linked (GlcNAc...) asparagine; by host glycans are attached at residues N63 and N111. N197 carries N-linked (GlcNAc...) asparagine; by host glycosylation. Residues N255, N275, and N299 are each glycosylated (N-linked (GlcNAc...) asparagine; by host). The tract at residues 269–338 (EDIDDPNNSN…TSEGFNETTT (70 aa)) is disordered. Polar residues-rich tracts occupy residues 288-302 (EKPNGNVFQRSNYTE) and 312-321 (TAATCDTNCE). N-linked (GlcNAc...) asparagine; by host glycans are attached at residues N334, N371, N374, and N378. 2 disordered regions span residues 387–408 (TPTSQDDATPSIPSVQTPNYNT) and 420–516 (IEEG…RPPA). The segment covering 424–440 (PSNSTTSEKATASTLSH) has biased composition (polar residues). Residues N426, N445, N455, and N483 are each glycosylated (N-linked (GlcNAc...) asparagine; by host). The span at 450–476 (IYTTLNKTTQLPSTNKPTNSQAKSSTK) shows a compositional bias: polar residues. Residues 484–495 (KTTSNPAISLTD) are compositionally biased toward polar residues. The chain crosses the membrane as a helical span at residues 528–548 (IGLLTAVALTCGLITLFHYLF).

It localises to the host membrane. The protein resides in the virion membrane. Inhibits the complement component of the host innate immune response. Regulates host C3 convertases, accelerating their decay, and acts as a cofactor for factor I degradation of C4b and C3b. Also binds heparin, and therefore may play two distinct roles when incorporated in virion membranes: immune evasion and host cell binding. This Human herpesvirus 8 type P (isolate GK18) (HHV-8) protein is Complement control protein (ORF4).